The primary structure comprises 290 residues: Pyridoxal kinase PdxY (290 aa).

Residue serine 14 coordinates substrate. Positions 116 and 153 each coordinate ATP. Aspartate 226 serves as a coordination point for substrate.

It belongs to the pyridoxine kinase family. PdxY subfamily. As to quaternary structure, homodimer. Mg(2+) is required as a cofactor.

The enzyme catalyses pyridoxal + ATP = pyridoxal 5'-phosphate + ADP + H(+). It participates in cofactor metabolism; pyridoxal 5'-phosphate salvage; pyridoxal 5'-phosphate from pyridoxal: step 1/1. Its function is as follows. Pyridoxal kinase involved in the salvage pathway of pyridoxal 5'-phosphate (PLP). Catalyzes the phosphorylation of pyridoxal to PLP. In Rubrobacter xylanophilus (strain DSM 9941 / JCM 11954 / NBRC 16129 / PRD-1), this protein is Pyridoxal kinase PdxY.